Here is a 195-residue protein sequence, read N- to C-terminus: Imidazoleglycerol-phosphate dehydratase (195 aa).

The protein belongs to the imidazoleglycerol-phosphate dehydratase family.

It is found in the cytoplasm. The enzyme catalyses D-erythro-1-(imidazol-4-yl)glycerol 3-phosphate = 3-(imidazol-4-yl)-2-oxopropyl phosphate + H2O. It functions in the pathway amino-acid biosynthesis; L-histidine biosynthesis; L-histidine from 5-phospho-alpha-D-ribose 1-diphosphate: step 6/9. This is Imidazoleglycerol-phosphate dehydratase from Heliobacterium modesticaldum (strain ATCC 51547 / Ice1).